The primary structure comprises 252 residues: Triosephosphate isomerase (252 aa).

9–11 (NWK) contributes to the substrate binding site. The active-site Electrophile is the H95. E167 serves as the catalytic Proton acceptor. Substrate is bound by residues G173, S213, and 234 to 235 (GG). Residue S213 is modified to Phosphoserine.

Belongs to the triosephosphate isomerase family. Homodimer.

It localises to the cytoplasm. It carries out the reaction D-glyceraldehyde 3-phosphate = dihydroxyacetone phosphate. Its pathway is carbohydrate biosynthesis; gluconeogenesis. It functions in the pathway carbohydrate degradation; glycolysis; D-glyceraldehyde 3-phosphate from glycerone phosphate: step 1/1. Involved in the gluconeogenesis. Catalyzes stereospecifically the conversion of dihydroxyacetone phosphate (DHAP) to D-glyceraldehyde-3-phosphate (G3P). The sequence is that of Triosephosphate isomerase from Oceanobacillus iheyensis (strain DSM 14371 / CIP 107618 / JCM 11309 / KCTC 3954 / HTE831).